The following is a 760-amino-acid chain: MOXD1 homolog 2 (760 aa).

The interval 1 to 34 is disordered; it reads MAHPRKAVATPATLQLGPPAQTAQSPAATLRHSR. Residues 18–34 are compositionally biased toward low complexity; that stretch reads PPAQTAQSPAATLRHSR. The chain crosses the membrane as a helical span at residues 47–67; that stretch reads CFISCHTFNLFLLLLLLASGV. N-linked (GlcNAc...) asparagine glycans are attached at residues Asn-78, Asn-198, and Asn-223. The region spanning 117-233 is the DOMON domain; the sequence is DDFRILWQII…DTMRLLYMYH (117 aa). 3 disulfides stabilise this stretch: Cys-339–Cys-367, Cys-467–Cys-581, and Cys-543–Cys-565. Asn-668 carries N-linked (GlcNAc...) asparagine glycosylation. The interval 678–701 is disordered; sequence RCKPKRPLAPPTERTAPPPASDLS. Residues 740–760 form a helical membrane-spanning segment; that stretch reads FISCLLWLGASSWWLLLMLRT.

Belongs to the copper type II ascorbate-dependent monooxygenase family.

It localises to the membrane. The chain is MOXD1 homolog 2 (olf413) from Drosophila melanogaster (Fruit fly).